The following is a 62-amino-acid chain: Large ribosomal subunit protein uL29 (62 aa).

This sequence belongs to the universal ribosomal protein uL29 family.

This is Large ribosomal subunit protein uL29 from Geotalea daltonii (strain DSM 22248 / JCM 15807 / FRC-32) (Geobacter daltonii).